Here is a 295-residue protein sequence, read N- to C-terminus: 5,10-methylenetetrahydrofolate reductase (295 aa).

Catalysis depends on Glu-28, which acts as the Proton donor/acceptor. Thr-59 serves as a coordination point for NADH. 12 residues coordinate FAD: His-89, Arg-119, Gly-120, Asp-121, Ala-133, Tyr-153, His-157, Ala-160, Asp-166, Asn-169, Arg-172, and Lys-173. Asp-121 contacts (6S)-5-methyl-5,6,7,8-tetrahydrofolate. Position 184 (Gln-184) interacts with NADH. The (6S)-5-methyl-5,6,7,8-tetrahydrofolate site is built by Gln-184, Gln-220, and Lys-280.

Belongs to the methylenetetrahydrofolate reductase family. The cofactor is FAD.

It catalyses the reaction (6S)-5-methyl-5,6,7,8-tetrahydrofolate + NAD(+) = (6R)-5,10-methylene-5,6,7,8-tetrahydrofolate + NADH + H(+). It participates in one-carbon metabolism; tetrahydrofolate interconversion. It functions in the pathway amino-acid biosynthesis; L-methionine biosynthesis via de novo pathway. In terms of biological role, catalyzes the NADH-dependent reduction of 5,10-methylenetetrahydrofolate to 5-methyltetrahydrofolate. Is required to provide the methyl group necessary for methionine synthetase to convert homocysteine to methionine; the methyl group is given by 5-methyltetrahydrofolate. The chain is 5,10-methylenetetrahydrofolate reductase (metF) from Buchnera aphidicola subsp. Baizongia pistaciae (strain Bp).